Consider the following 945-residue polypeptide: Translation initiation factor IF-2 (945 aa).

Disordered stretches follow at residues 52–80 (RSHGQSQPKGKITLTRKQTSEIRATDSSG) and 96–357 (MKRD…FQAP). Acidic residues predominate over residues 153-175 (PEPEPIVEPEPEPEPEPEPEPQP). Composition is skewed to basic and acidic residues over residues 215–283 (DEER…KEAA) and 294–310 (AKTEEKPAGKDAKRTAR). The 170-residue stretch at 445-614 (PRAPVVTVMG…LLQAEVLELT (170 aa)) folds into the tr-type G domain. Positions 454–461 (GHVDHGKT) are G1. 454–461 (GHVDHGKT) is a binding site for GTP. The tract at residues 479–483 (GITQH) is G2. The interval 500 to 503 (DTPG) is G3. Residues 500 to 504 (DTPGH) and 554 to 557 (NKID) contribute to the GTP site. The segment at 554-557 (NKID) is G4. A G5 region spans residues 590-592 (SAK).

The protein belongs to the TRAFAC class translation factor GTPase superfamily. Classic translation factor GTPase family. IF-2 subfamily.

The protein localises to the cytoplasm. Its function is as follows. One of the essential components for the initiation of protein synthesis. Protects formylmethionyl-tRNA from spontaneous hydrolysis and promotes its binding to the 30S ribosomal subunits. Also involved in the hydrolysis of GTP during the formation of the 70S ribosomal complex. In Aromatoleum aromaticum (strain DSM 19018 / LMG 30748 / EbN1) (Azoarcus sp. (strain EbN1)), this protein is Translation initiation factor IF-2.